The sequence spans 426 residues: UPF0597 protein CLB_1750 (426 aa).

It belongs to the UPF0597 family.

This Clostridium botulinum (strain ATCC 19397 / Type A) protein is UPF0597 protein CLB_1750.